The chain runs to 658 residues: Probable Xaa-Pro aminopeptidase P (658 aa).

Positions 449, 460, 558, and 572 each coordinate Mn(2+).

Belongs to the peptidase M24B family. The cofactor is Mn(2+).

The catalysed reaction is Release of any N-terminal amino acid, including proline, that is linked to proline, even from a dipeptide or tripeptide.. Functionally, catalyzes the removal of a penultimate prolyl residue from the N-termini of peptides. The chain is Probable Xaa-Pro aminopeptidase P (ampp) from Aspergillus clavatus (strain ATCC 1007 / CBS 513.65 / DSM 816 / NCTC 3887 / NRRL 1 / QM 1276 / 107).